The chain runs to 215 residues: Adenylate kinase (215 aa).

10–15 (GAGKGT) contacts ATP. Positions 30–59 (STGDILRANVREGTELGLAAKAYMDKGELV) are NMP. AMP contacts are provided by residues T31, R36, 57–59 (ELV), 85–88 (GYPR), and Q92. Residues 126–162 (GRLMCKCGASYHIISNPPKKDNVCDICGGEVFQRADD) are LID. Position 127 (R127) interacts with ATP. Positions 130 and 132 each coordinate Zn(2+). Position 135–136 (135–136 (SY)) interacts with ATP. Zn(2+) contacts are provided by C149 and C152. Residues R159 and R170 each contribute to the AMP site. K198 contributes to the ATP binding site.

It belongs to the adenylate kinase family. In terms of assembly, monomer.

Its subcellular location is the cytoplasm. The catalysed reaction is AMP + ATP = 2 ADP. It participates in purine metabolism; AMP biosynthesis via salvage pathway; AMP from ADP: step 1/1. Catalyzes the reversible transfer of the terminal phosphate group between ATP and AMP. Plays an important role in cellular energy homeostasis and in adenine nucleotide metabolism. In Methanosarcina acetivorans (strain ATCC 35395 / DSM 2834 / JCM 12185 / C2A), this protein is Adenylate kinase.